The following is a 332-amino-acid chain: GTP 3',8-cyclase (332 aa).

Positions 9 to 234 (TFGRRISYLR…DSDHRTGGPS (226 aa)) constitute a Radical SAM core domain. Position 18 (Arg18) interacts with GTP. Cys25 and Cys29 together coordinate [4Fe-4S] cluster. Tyr31 provides a ligand contact to S-adenosyl-L-methionine. Cys32 is a [4Fe-4S] cluster binding site. Arg67 is a binding site for GTP. Gly71 serves as a coordination point for S-adenosyl-L-methionine. Thr100 is a GTP binding site. Ser124 is a binding site for S-adenosyl-L-methionine. Lys160 provides a ligand contact to GTP. Residue Met194 coordinates S-adenosyl-L-methionine. [4Fe-4S] cluster contacts are provided by Cys257 and Cys260. 262–264 (RVR) provides a ligand contact to GTP. [4Fe-4S] cluster is bound at residue Cys274.

The protein belongs to the radical SAM superfamily. MoaA family. In terms of assembly, monomer and homodimer. It depends on [4Fe-4S] cluster as a cofactor.

It catalyses the reaction GTP + AH2 + S-adenosyl-L-methionine = (8S)-3',8-cyclo-7,8-dihydroguanosine 5'-triphosphate + 5'-deoxyadenosine + L-methionine + A + H(+). Its pathway is cofactor biosynthesis; molybdopterin biosynthesis. Functionally, catalyzes the cyclization of GTP to (8S)-3',8-cyclo-7,8-dihydroguanosine 5'-triphosphate. This chain is GTP 3',8-cyclase, found in Erythrobacter litoralis (strain HTCC2594).